Here is a 336-residue protein sequence, read N- to C-terminus: D-aspartate oxidase (336 aa).

E34, K35, T41, S42, G304, V308, and S309 together coordinate FAD. The Microbody targeting signal signature appears at 334–336 (SKL).

This sequence belongs to the DAMOX/DASOX family. As to quaternary structure, monomer. Requires FAD as cofactor.

The protein localises to the peroxisome matrix. It catalyses the reaction D-aspartate + O2 + H2O = oxaloacetate + H2O2 + NH4(+). The enzyme catalyses D-glutamate + O2 + H2O = H2O2 + 2-oxoglutarate + NH4(+). Functionally, selectively catalyzes the oxidative deamination of acidic amino acids. Suppresses the level of D-aspartate in the brain, an amino acid that can act as an agonist for glutamate receptors. Protects the organism from the toxicity of D-amino acids. May also function in the intestine. This is D-aspartate oxidase from Octopus vulgaris (Common octopus).